A 222-amino-acid polypeptide reads, in one-letter code: Peptide methionine sulfoxide reductase MsrA (222 aa).

C54 is a catalytic residue.

This sequence belongs to the MsrA Met sulfoxide reductase family.

The enzyme catalyses L-methionyl-[protein] + [thioredoxin]-disulfide + H2O = L-methionyl-(S)-S-oxide-[protein] + [thioredoxin]-dithiol. It carries out the reaction [thioredoxin]-disulfide + L-methionine + H2O = L-methionine (S)-S-oxide + [thioredoxin]-dithiol. Has an important function as a repair enzyme for proteins that have been inactivated by oxidation. Catalyzes the reversible oxidation-reduction of methionine sulfoxide in proteins to methionine. The sequence is that of Peptide methionine sulfoxide reductase MsrA from Methylococcus capsulatus (strain ATCC 33009 / NCIMB 11132 / Bath).